Reading from the N-terminus, the 303-residue chain is Acetylglutamate kinase (303 aa).

Residues 76–77 (GG), arginine 98, and asparagine 199 each bind substrate.

The protein belongs to the acetylglutamate kinase family. ArgB subfamily.

Its subcellular location is the cytoplasm. It carries out the reaction N-acetyl-L-glutamate + ATP = N-acetyl-L-glutamyl 5-phosphate + ADP. The protein operates within amino-acid biosynthesis; L-arginine biosynthesis; N(2)-acetyl-L-ornithine from L-glutamate: step 2/4. Functionally, catalyzes the ATP-dependent phosphorylation of N-acetyl-L-glutamate. In Clavibacter michiganensis subsp. michiganensis (strain NCPPB 382), this protein is Acetylglutamate kinase.